The primary structure comprises 597 residues: Zinc finger CCCH domain-containing protein 29 (597 aa).

ANK repeat units lie at residues 76-106 (EERT…DVNR) and 111-143 (EKVT…SPNC). 2 consecutive C3H1-type zinc fingers follow at residues 254–281 (PYTC…HGVF) and 289–313 (QYRT…HRRD). Residues 320–337 (ASTGSAMVSPRSSNQSPE) show a composition bias toward polar residues. The tract at residues 320-341 (ASTGSAMVSPRSSNQSPEMSVM) is disordered.

Expressed in roots and anthers.

It localises to the nucleus. Involved in salt stress response. May positively modulate plant tolerance to salt stress. In Arabidopsis thaliana (Mouse-ear cress), this protein is Zinc finger CCCH domain-containing protein 29.